A 396-amino-acid chain; its full sequence is Orotidine 5'-phosphate decarboxylase (396 aa).

Residues Asp-46, Lys-68–His-70, Asp-103–Thr-112, Tyr-346, and Arg-365 each bind substrate. Residue Lys-105 is the Proton donor of the active site.

The protein belongs to the OMP decarboxylase family.

It carries out the reaction orotidine 5'-phosphate + H(+) = UMP + CO2. Its pathway is pyrimidine metabolism; UMP biosynthesis via de novo pathway; UMP from orotate: step 2/2. This chain is Orotidine 5'-phosphate decarboxylase (URA3), found in Sordaria macrospora (strain ATCC MYA-333 / DSM 997 / K(L3346) / K-hell).